Consider the following 688-residue polypeptide: T-box transcription factor TBX2-A (688 aa).

A DNA-binding region (T-box) is located at residues 104–277 (LWDQFHKIGT…NNPFAKGFRD (174 aa)). Disordered regions lie at residues 301 to 436 (CKAD…GSLS) and 606 to 688 (PSTN…ETPK). 3 stretches are compositionally biased toward basic and acidic residues: residues 340-361 (NNRE…EIRS), 378-403 (RLED…KDGS), and 412-430 (SLEK…KSDP). Residues 621-636 (PGSESSKPGSSRESSP) show a composition bias toward low complexity. Positions 655 to 679 (ASMKDSINELQNIQRLVSGLESQRE) form a coiled coil. Basic and acidic residues predominate over residues 676-688 (SQREISPGRETPK).

As to quaternary structure, binds DNA as a monomer.

Its subcellular location is the nucleus. Its function is as follows. Transcription factor which acts as a transcriptional repressor. May also function as a transcriptional activator. Binds to the palindromic T site 5'-TTCACACCTAGGTGTGAA-3' DNA sequence, or a half-site, which are present in the regulatory region of several genes. The polypeptide is T-box transcription factor TBX2-A (tbx2-a) (Xenopus laevis (African clawed frog)).